The following is a 190-amino-acid chain: Guanylate kinase (190 aa).

Residues 7–186 (GKLIVFSAPS…AVDDVEAAIV (180 aa)) enclose the Guanylate kinase-like domain. Position 14-21 (14-21 (APSGAGKT)) interacts with ATP.

This sequence belongs to the guanylate kinase family.

Its subcellular location is the cytoplasm. It catalyses the reaction GMP + ATP = GDP + ADP. Essential for recycling GMP and indirectly, cGMP. The protein is Guanylate kinase of Chlorobium chlorochromatii (strain CaD3).